The chain runs to 359 residues: Small ribosomal subunit biogenesis GTPase RsgA (359 aa).

Positions Lys101–Val259 constitute a CP-type G domain. Residues Asn149 to Asp152 and Gly201 to Thr209 each bind GTP. Residues Cys284, Cys289, His291, and Cys297 each contribute to the Zn(2+) site. Residues Asp331–Lys359 are disordered. Basic residues predominate over residues Leu349–Lys359.

Belongs to the TRAFAC class YlqF/YawG GTPase family. RsgA subfamily. Monomer. Associates with 30S ribosomal subunit, binds 16S rRNA. The cofactor is Zn(2+).

Its subcellular location is the cytoplasm. Functionally, one of several proteins that assist in the late maturation steps of the functional core of the 30S ribosomal subunit. Helps release RbfA from mature subunits. May play a role in the assembly of ribosomal proteins into the subunit. Circularly permuted GTPase that catalyzes slow GTP hydrolysis, GTPase activity is stimulated by the 30S ribosomal subunit. The polypeptide is Small ribosomal subunit biogenesis GTPase RsgA (Leptospira interrogans serogroup Icterohaemorrhagiae serovar copenhageni (strain Fiocruz L1-130)).